The primary structure comprises 1253 residues: Cytoplasmic FMR1-interacting protein 1 homolog (1253 aa).

Belongs to the CYFIP family.

The protein localises to the cytoplasm. Its subcellular location is the perinuclear region. It localises to the cell projection. The protein resides in the lamellipodium. It is found in the ruffle. The protein localises to the synapse. Its subcellular location is the synaptosome. In terms of biological role, involved in formation of membrane ruffles and lamellipodia protrusions and in axon outgrowth. Binds to F-actin but not to RNA. This Danio rerio (Zebrafish) protein is Cytoplasmic FMR1-interacting protein 1 homolog.